A 549-amino-acid polypeptide reads, in one-letter code: Exodeoxyribonuclease 7 large subunit (549 aa).

Residues 511 to 549 (LVATDPPVDPKPTRKPVQKSSSPKPSSRKPKKSQQEDLF) are disordered.

Belongs to the XseA family. In terms of assembly, heterooligomer composed of large and small subunits.

It localises to the cytoplasm. The enzyme catalyses Exonucleolytic cleavage in either 5'- to 3'- or 3'- to 5'-direction to yield nucleoside 5'-phosphates.. Functionally, bidirectionally degrades single-stranded DNA into large acid-insoluble oligonucleotides, which are then degraded further into small acid-soluble oligonucleotides. The chain is Exodeoxyribonuclease 7 large subunit from Beijerinckia indica subsp. indica (strain ATCC 9039 / DSM 1715 / NCIMB 8712).